The chain runs to 217 residues: Transmembrane protein 253 (217 aa).

4 helical membrane passes run 33–53 (LVLAVSQLWLAVVVVPLAVSV), 62–82 (MATALPLGPGASGLLTGTVTL), 96–116 (MMIFNTFNLILGFIVVVVEVM), and 138–158 (LSAEAFTLGGVLVSVHALFLL). The disordered stretch occupies residues 187–217 (PGLENGPTVASTGANERVGQREQTRAALLPP).

It is found in the membrane. This is Transmembrane protein 253 (TMEM253) from Homo sapiens (Human).